Here is a 78-residue protein sequence, read N- to C-terminus: Large ribosomal subunit protein uL24 (78 aa).

Residues 52–78 (PSEKTPNGGHVNKEMPIDISNVAKVEG) are disordered.

The protein belongs to the universal ribosomal protein uL24 family. As to quaternary structure, part of the 50S ribosomal subunit.

Functionally, one of two assembly initiator proteins, it binds directly to the 5'-end of the 23S rRNA, where it nucleates assembly of the 50S subunit. Its function is as follows. One of the proteins that surrounds the polypeptide exit tunnel on the outside of the subunit. The sequence is that of Large ribosomal subunit protein uL24 from Campylobacter concisus (strain 13826).